The sequence spans 109 residues: Mitochondrial pyruvate carrier 1 (109 aa).

Alanine 2 carries the N-acetylalanine modification. Over 2–20 (AGALVRKAADYVRSKDFRD) the chain is Mitochondrial matrix. Residues 21–41 (YLMSTHFWGPVANWGLPIAAI) form a helical membrane-spanning segment. Residues 42 to 52 (NDMKKSPEIIS) lie on the Mitochondrial intermembrane side of the membrane. The chain crosses the membrane as a helical span at residues 53-71 (GRMTFALCCYSLTFMRFAY). Position 72 is an N6-acetyllysine (lysine 72). The Mitochondrial matrix portion of the chain corresponds to 72 to 109 (KVQPRNWLLFACHVTNEVAQLIQGGRLINYEMSKRPSA).

This sequence belongs to the mitochondrial pyruvate carrier (MPC) (TC 2.A.105) family. In terms of assembly, homodimer. Forms heterodimer with MPC2. The heterodimer is the more stable and dominant form.

It localises to the mitochondrion inner membrane. It catalyses the reaction pyruvate(out) + H(+)(out) = pyruvate(in) + H(+)(in). Its function is as follows. Mediates the uptake of pyruvate into mitochondria. In Mus musculus (Mouse), this protein is Mitochondrial pyruvate carrier 1 (Mpc1).